A 375-amino-acid chain; its full sequence is Chaperone protein DnaJ (375 aa).

One can recognise a J domain in the interval 5-70 (DYYEVLGVER…GKRMAYDQYG (66 aa)). The segment at 134–212 (GTTVTIRVPT…CHGQGRVEEH (79 aa)) adopts a CR-type zinc-finger fold. Zn(2+) is bound by residues C147, C150, C164, C167, C186, C189, C200, and C203. 4 CXXCXGXG motif repeats span residues 147–154 (CKTCDGSG), 164–171 (CTTCGGIG), 186–193 (CPRCHGSG), and 200–207 (CPDCHGQG).

The protein belongs to the DnaJ family. In terms of assembly, homodimer. The cofactor is Zn(2+).

The protein resides in the cytoplasm. Participates actively in the response to hyperosmotic and heat shock by preventing the aggregation of stress-denatured proteins and by disaggregating proteins, also in an autonomous, DnaK-independent fashion. Unfolded proteins bind initially to DnaJ; upon interaction with the DnaJ-bound protein, DnaK hydrolyzes its bound ATP, resulting in the formation of a stable complex. GrpE releases ADP from DnaK; ATP binding to DnaK triggers the release of the substrate protein, thus completing the reaction cycle. Several rounds of ATP-dependent interactions between DnaJ, DnaK and GrpE are required for fully efficient folding. Also involved, together with DnaK and GrpE, in the DNA replication of plasmids through activation of initiation proteins. The polypeptide is Chaperone protein DnaJ (Azotobacter vinelandii (strain DJ / ATCC BAA-1303)).